The chain runs to 560 residues: Vesicular glutamate transporter 1 (560 aa).

The Cytoplasmic segment spans residues 1–63; it reads MEFRQEEFRK…CTCFGLPRRY (63 aa). A helical transmembrane segment spans residues 64 to 84; sequence IIAIMSGLGFCISFGIRCNLG. Topologically, residues 85 to 116 are extracellular; that stretch reads VAIVSMVNNSTTHRGGHVVMQKAQFNWDPETV. Residues 117 to 137 form a helical membrane-spanning segment; sequence GLIHGSFFWGYIVTQIPGGFI. At 138–140 the chain is on the cytoplasmic side; sequence CQK. A helical transmembrane segment spans residues 141–161; the sequence is FAANRVFGFAIVATSTLNMLI. Topologically, residues 162-169 are extracellular; that stretch reads PSAARVHY. The chain crosses the membrane as a helical span at residues 170-190; sequence GCVIFVRILQGLVEGVTYPAC. Topologically, residues 191–208 are cytoplasmic; the sequence is HGIWSKWAPPLERSRLAT. Residues 209 to 229 traverse the membrane as a helical segment; the sequence is TAFCGSYAGAVVAMPLAGVLV. Over 230–236 the chain is Extracellular; that stretch reads QYSGWSS. Residues 237-257 traverse the membrane as a helical segment; the sequence is VFYVYGSFGIFWYLFWLLVSY. The Cytoplasmic segment spans residues 258 to 302; that stretch reads ESPALHPSISEEERKYIEDAIGESAKLMNPVTKFNTPWRRFFTSM. A helical transmembrane segment spans residues 303–323; it reads PVYAIIVANFCRSWTFYLLLI. Residues 324 to 341 are Extracellular-facing; that stretch reads SQPAYFEEVFGFEISKVG. A helical membrane pass occupies residues 342–362; that stretch reads LVSALPHLVMTIIVPIGGQIA. Topologically, residues 363 to 378 are cytoplasmic; that stretch reads DFLRSRRIMSTTNVRK. The chain crosses the membrane as a helical span at residues 379–399; sequence LMNCGGFGMEATLLLVVGYSH. Residues 400–401 lie on the Extracellular side of the membrane; that stretch reads SK. The chain crosses the membrane as a helical span at residues 402-422; it reads GVAISFLVLAVGFSGFAISGF. The Cytoplasmic segment spans residues 423–435; sequence NVNHLDIAPRYAS. The helical transmembrane segment at 436 to 456 threads the bilayer; it reads ILMGISNGVGTLSGMVCPIIV. The Extracellular segment spans residues 457 to 469; sequence GAMTKHKTREEWQ. A helical membrane pass occupies residues 470–490; that stretch reads YVFLIASLVHYGGVIFYGVFA. The Cytoplasmic portion of the chain corresponds to 491–560; the sequence is SGEKQPWAEP…PRPPPPVRDY (70 aa). The interval 497–560 is disordered; sequence WAEPEEMSEE…PRPPPPVRDY (64 aa). The residue at position 504 (S504) is a Phosphoserine. The segment covering 520–529 has biased composition (acidic residues); it reads DESEMEDEAE. Pro residues-rich tracts occupy residues 531–540 and 550–560; these read PGAPPAPPPS and PPRPPPPVRDY.

Belongs to the major facilitator superfamily. Sodium/anion cotransporter family. VGLUT subfamily. In terms of assembly, interacts with SHANK3.

The protein resides in the cytoplasmic vesicle. It localises to the secretory vesicle. Its subcellular location is the synaptic vesicle membrane. The protein localises to the cell membrane. It is found in the synapse. The protein resides in the synaptosome. It catalyses the reaction L-glutamate(out) = L-glutamate(in). The enzyme catalyses chloride(in) = chloride(out). The catalysed reaction is 3 Na(+)(out) + phosphate(out) = 3 Na(+)(in) + phosphate(in). It carries out the reaction phosphate(in) = phosphate(out). It catalyses the reaction K(+)(in) + H(+)(out) = K(+)(out) + H(+)(in). With respect to regulation, chloride channel activity is allosterically activated by lumenal H(+) and Cl(-) leading to synaptic vesicles acidification. The L-glutamate transport activity is allosterically activated by lumenal H(+) and Cl(-). The allosteric activation by H(+) efficiently prevents non-vesicular efflux across the plasma membrane, thereby restricting L-glutamate transport activity to acidic membranes such as synaptic vesicles. Multifunctional transporter that transports L-glutamate as well as multiple ions such as chloride, proton, potassium, sodium and phosphate. At the synaptic vesicle membrane, mainly functions as an uniporter which transports preferentially L-glutamate but also phosphate from the cytoplasm into synaptic vesicles at presynaptic nerve terminals of excitatory neural cells. The L-glutamate or phosphate uniporter activity is electrogenic and is driven by the proton electrochemical gradient, mainly by the electrical gradient established by the vacuolar H(+)-ATPase across the synaptic vesicle membrane. In addition, functions as a chloride channel that allows a chloride permeation through the synaptic vesicle membrane that affects the proton electrochemical gradient and promotes synaptic vesicles acidification. Moreover, may function as a K(+)/H(+) antiport allowing to maintain the electrical gradient and to decrease chemical gradient and therefore sustain vesicular glutamate uptake. The vesicular K(+)/H(+) antiport activity is electroneutral. At the plasma membrane, following exocytosis, functions as a symporter of Na(+) and phosphate from the extracellular space to the cytoplasm allowing synaptic phosphate homeostasis regulation. The symporter activity is driven by an inside negative membrane potential and is electrogenic. Is necessary for synaptic signaling of visual-evoked responses from photoreceptors. The chain is Vesicular glutamate transporter 1 from Bos taurus (Bovine).